A 162-amino-acid chain; its full sequence is D-aminoacyl-tRNA deacylase (162 aa).

A Gly-cisPro motif, important for rejection of L-amino acids motif is present at residues 145–146 (GP).

It belongs to the DTD family. Homodimer.

The protein resides in the cytoplasm. The enzyme catalyses glycyl-tRNA(Ala) + H2O = tRNA(Ala) + glycine + H(+). The catalysed reaction is a D-aminoacyl-tRNA + H2O = a tRNA + a D-alpha-amino acid + H(+). An aminoacyl-tRNA editing enzyme that deacylates mischarged D-aminoacyl-tRNAs. Also deacylates mischarged glycyl-tRNA(Ala), protecting cells against glycine mischarging by AlaRS. Acts via tRNA-based rather than protein-based catalysis; rejects L-amino acids rather than detecting D-amino acids in the active site. By recycling D-aminoacyl-tRNA to D-amino acids and free tRNA molecules, this enzyme counteracts the toxicity associated with the formation of D-aminoacyl-tRNA entities in vivo and helps enforce protein L-homochirality. In Bifidobacterium longum subsp. infantis (strain ATCC 15697 / DSM 20088 / JCM 1222 / NCTC 11817 / S12), this protein is D-aminoacyl-tRNA deacylase.